Here is a 358-residue protein sequence, read N- to C-terminus: UDP-N-acetylglucosamine--N-acetylmuramyl-(pentapeptide) pyrophosphoryl-undecaprenol N-acetylglucosamine transferase (358 aa).

Positions 166, 196, and 291 each coordinate UDP-N-acetyl-alpha-D-glucosamine.

Belongs to the glycosyltransferase 28 family. MurG subfamily.

It localises to the cell membrane. The catalysed reaction is Mur2Ac(oyl-L-Ala-gamma-D-Glu-L-Lys-D-Ala-D-Ala)-di-trans,octa-cis-undecaprenyl diphosphate + UDP-N-acetyl-alpha-D-glucosamine = beta-D-GlcNAc-(1-&gt;4)-Mur2Ac(oyl-L-Ala-gamma-D-Glu-L-Lys-D-Ala-D-Ala)-di-trans,octa-cis-undecaprenyl diphosphate + UDP + H(+). It functions in the pathway cell wall biogenesis; peptidoglycan biosynthesis. Its function is as follows. Cell wall formation. Catalyzes the transfer of a GlcNAc subunit on undecaprenyl-pyrophosphoryl-MurNAc-pentapeptide (lipid intermediate I) to form undecaprenyl-pyrophosphoryl-MurNAc-(pentapeptide)GlcNAc (lipid intermediate II). The polypeptide is UDP-N-acetylglucosamine--N-acetylmuramyl-(pentapeptide) pyrophosphoryl-undecaprenol N-acetylglucosamine transferase (Staphylococcus saprophyticus subsp. saprophyticus (strain ATCC 15305 / DSM 20229 / NCIMB 8711 / NCTC 7292 / S-41)).